The chain runs to 143 residues: 3-hydroxyacyl-[acyl-carrier-protein] dehydratase FabZ (143 aa).

His47 is a catalytic residue.

This sequence belongs to the thioester dehydratase family. FabZ subfamily.

The protein localises to the cytoplasm. It catalyses the reaction a (3R)-hydroxyacyl-[ACP] = a (2E)-enoyl-[ACP] + H2O. In terms of biological role, involved in unsaturated fatty acids biosynthesis. Catalyzes the dehydration of short chain beta-hydroxyacyl-ACPs and long chain saturated and unsaturated beta-hydroxyacyl-ACPs. This Rickettsia canadensis (strain McKiel) protein is 3-hydroxyacyl-[acyl-carrier-protein] dehydratase FabZ.